The following is a 140-amino-acid chain: Cell division protein SepF (140 aa).

The segment at 15–47 (DSQYEEPTEASQAAAPTESATNTRSTPKVVPMQ) is disordered.

It belongs to the SepF family. As to quaternary structure, homodimer. Interacts with FtsZ.

It localises to the cytoplasm. Cell division protein that is part of the divisome complex and is recruited early to the Z-ring. Probably stimulates Z-ring formation, perhaps through the cross-linking of FtsZ protofilaments. Its function overlaps with FtsA. The protein is Cell division protein SepF of Lactiplantibacillus plantarum (strain ATCC BAA-793 / NCIMB 8826 / WCFS1) (Lactobacillus plantarum).